The chain runs to 188 residues: Molybdopterin synthase catalytic subunit (188 aa).

The segment covering 1-14 (MTTQPPQDQTSTTP) has biased composition (low complexity). Positions 1–23 (MTTQPPQDQTSTTPSLPPHLDPT) are disordered. Residues 134–135 (HR), Lys150, and 157–159 (KRE) each bind substrate.

This sequence belongs to the MoaE family. MOCS2B subfamily. In terms of assembly, heterotetramer; composed of 2 small (MOCS2A) and 2 large (MOCS2B) subunits.

It is found in the cytoplasm. It carries out the reaction 2 [molybdopterin-synthase sulfur-carrier protein]-C-terminal-Gly-aminoethanethioate + cyclic pyranopterin phosphate + H2O = molybdopterin + 2 [molybdopterin-synthase sulfur-carrier protein]-C-terminal Gly-Gly + 2 H(+). Its pathway is cofactor biosynthesis; molybdopterin biosynthesis. Catalytic subunit of the molybdopterin synthase complex, a complex that catalyzes the conversion of precursor Z into molybdopterin. Acts by mediating the incorporation of 2 sulfur atoms from thiocarboxylated MOCS2A into precursor Z to generate a dithiolene group. This chain is Molybdopterin synthase catalytic subunit, found in Neosartorya fischeri (strain ATCC 1020 / DSM 3700 / CBS 544.65 / FGSC A1164 / JCM 1740 / NRRL 181 / WB 181) (Aspergillus fischerianus).